A 255-amino-acid polypeptide reads, in one-letter code: Cytochrome c oxidase subunit 2 (255 aa).

Positions 1 to 16 (MFNLFPPFGANTAIFN) are cleaved as a signal peptide. The Mitochondrial intermembrane segment spans residues 17 to 43 (DAPQPWQVGFQDGASPTQEGITELHDS). Residues 44–64 (IFFYLVIICFGVLWVLSSVIV) form a helical membrane-spanning segment. Over 65-80 (NFNSNKSQLVYKYANH) the chain is Mitochondrial matrix. A helical transmembrane segment spans residues 81-101 (GTLIELIWTITPALVLIAIAF). Over 102–255 (PSFKLLYLMD…KYLAWIDSQA (154 aa)) the chain is Mitochondrial intermembrane. Residues His189, Cys224, Glu226, Cys228, His232, and Met235 each contribute to the Cu cation site. Glu226 lines the Mg(2+) pocket.

This sequence belongs to the cytochrome c oxidase subunit 2 family. In terms of assembly, component of the cytochrome c oxidase (complex IV, CIV), a multisubunit enzyme composed of a catalytic core of 3 subunits and several supernumerary subunits. The complex exists as a monomer or a dimer and forms supercomplexes (SCs) in the inner mitochondrial membrane with ubiquinol-cytochrome c oxidoreductase (cytochrome b-c1 complex, complex III, CIII). Requires Cu cation as cofactor.

The protein localises to the mitochondrion inner membrane. It catalyses the reaction 4 Fe(II)-[cytochrome c] + O2 + 8 H(+)(in) = 4 Fe(III)-[cytochrome c] + 2 H2O + 4 H(+)(out). In terms of biological role, component of the cytochrome c oxidase, the last enzyme in the mitochondrial electron transport chain which drives oxidative phosphorylation. The respiratory chain contains 3 multisubunit complexes succinate dehydrogenase (complex II, CII), ubiquinol-cytochrome c oxidoreductase (cytochrome b-c1 complex, complex III, CIII) and cytochrome c oxidase (complex IV, CIV), that cooperate to transfer electrons derived from NADH and succinate to molecular oxygen, creating an electrochemical gradient over the inner membrane that drives transmembrane transport and the ATP synthase. Cytochrome c oxidase is the component of the respiratory chain that catalyzes the reduction of oxygen to water. Electrons originating from reduced cytochrome c in the intermembrane space (IMS) are transferred via the dinuclear copper A center (CU(A)) of subunit 2 and heme A of subunit 1 to the active site in subunit 1, a binuclear center (BNC) formed by heme A3 and copper B (CU(B)). The BNC reduces molecular oxygen to 2 water molecules using 4 electrons from cytochrome c in the IMS and 4 protons from the mitochondrial matrix. This is Cytochrome c oxidase subunit 2 (COX2) from Mycosarcoma maydis (Corn smut fungus).